The following is a 490-amino-acid chain: Dual specificity protein kinase CLK3 (490 aa).

Positions 1–138 are disordered; it reads MHHCKRYRSP…SKRSSRSVED (138 aa). Tyrosine 7 carries the post-translational modification Phosphotyrosine. Phosphoserine occurs at positions 9, 49, 51, 67, 76, and 78. 2 stretches are compositionally biased toward basic and acidic residues: residues 26–56 and 63–76; these read YSRE…DRIP and EHRD…EERS. The segment covering 88–116 has biased composition (basic residues); the sequence is RSRHRRRSRERGPYRTRKHAHHCHKRRTR. A compositionally biased stretch (low complexity) spans 117 to 130; it reads SCSSASSRSQQSSK. Serine 135 carries the post-translational modification Phosphoserine. The region spanning 156–472 is the Protein kinase domain; the sequence is YEIVGNLGEG…LAEALLHPFF (317 aa). ATP is bound by residues 162-170 and lysine 186; that span reads LGEGTFGKV. Aspartate 283 functions as the Proton acceptor in the catalytic mechanism.

The protein belongs to the protein kinase superfamily. CMGC Ser/Thr protein kinase family. Lammer subfamily. In terms of processing, autophosphorylates on all three types of residues.

It localises to the nucleus. It is found in the cytoplasm. Its subcellular location is the cytoplasmic vesicle. The protein resides in the secretory vesicle. The protein localises to the acrosome. It carries out the reaction L-seryl-[protein] + ATP = O-phospho-L-seryl-[protein] + ADP + H(+). The catalysed reaction is L-threonyl-[protein] + ATP = O-phospho-L-threonyl-[protein] + ADP + H(+). It catalyses the reaction L-tyrosyl-[protein] + ATP = O-phospho-L-tyrosyl-[protein] + ADP + H(+). Its activity is regulated as follows. Leucettine L41 inhibits its kinase activity and affects the regulation of alternative splicing mediated by phosphorylation of SR proteins. Dual specificity kinase acting on both serine/threonine and tyrosine-containing substrates. Phosphorylates serine- and arginine-rich (SR) proteins of the spliceosomal complex. May be a constituent of a network of regulatory mechanisms that enable SR proteins to control RNA splicing and can cause redistribution of SR proteins from speckles to a diffuse nucleoplasmic distribution. Phosphorylates SRSF1 and SRSF3. Regulates the alternative splicing of tissue factor (F3) pre-mRNA in endothelial cells. The polypeptide is Dual specificity protein kinase CLK3 (Clk3) (Rattus norvegicus (Rat)).